Here is a 259-residue protein sequence, read N- to C-terminus: UPF0246 protein VSAL_I2547 (259 aa).

Belongs to the UPF0246 family.

This is UPF0246 protein VSAL_I2547 from Aliivibrio salmonicida (strain LFI1238) (Vibrio salmonicida (strain LFI1238)).